Here is a 419-residue protein sequence, read N- to C-terminus: Testin (419 aa).

One can recognise a PET domain in the interval 92-199; it reads MILTNPVAAK…GDVKLPSEMN (108 aa). Disordered regions lie at residues 133–164 and 199–222; these read EKQPVAGSEGAQYRKKQLAKQLPAHDQDPSKC and NAQGDKVHNPAGDRNTPAAVGSKD. Positions 155-164 are enriched in basic and acidic residues; that stretch reads PAHDQDPSKC. LIM zinc-binding domains are found at residues 232-295, 297-357, and 360-419; these read YSCY…CDSE, PRCA…NHAV, and QGCH…KMMS.

Belongs to the prickle / espinas / testin family. As to quaternary structure, interacts via LIM domain 1 with ZYX. Interacts (via LIM domain 3) with ENAH and VASP. Interacts with ALKBH4, talin, actin, alpha-actinin, GRIP1 and PXN. Interacts (via LIM domain 2) with ACTL7A (via N-terminus). Heterodimer with ACTL7A; the heterodimer interacts with ENAH to form a heterotrimer.

It localises to the cytoplasm. The protein resides in the cell junction. Its subcellular location is the focal adhesion. In terms of biological role, scaffold protein that may play a role in cell adhesion, cell spreading and in the reorganization of the actin cytoskeleton. Plays a role in the regulation of cell proliferation. May act as a tumor suppressor. This chain is Testin (Tes), found in Rattus norvegicus (Rat).